Here is a 180-residue protein sequence, read N- to C-terminus: ATP synthase subunit delta (180 aa).

This sequence belongs to the ATPase delta chain family. In terms of assembly, F-type ATPases have 2 components, F(1) - the catalytic core - and F(0) - the membrane proton channel. F(1) has five subunits: alpha(3), beta(3), gamma(1), delta(1), epsilon(1). F(0) has three main subunits: a(1), b(2) and c(10-14). The alpha and beta chains form an alternating ring which encloses part of the gamma chain. F(1) is attached to F(0) by a central stalk formed by the gamma and epsilon chains, while a peripheral stalk is formed by the delta and b chains.

The protein resides in the cell inner membrane. Its function is as follows. F(1)F(0) ATP synthase produces ATP from ADP in the presence of a proton or sodium gradient. F-type ATPases consist of two structural domains, F(1) containing the extramembraneous catalytic core and F(0) containing the membrane proton channel, linked together by a central stalk and a peripheral stalk. During catalysis, ATP synthesis in the catalytic domain of F(1) is coupled via a rotary mechanism of the central stalk subunits to proton translocation. In terms of biological role, this protein is part of the stalk that links CF(0) to CF(1). It either transmits conformational changes from CF(0) to CF(1) or is implicated in proton conduction. In Trichlorobacter lovleyi (strain ATCC BAA-1151 / DSM 17278 / SZ) (Geobacter lovleyi), this protein is ATP synthase subunit delta.